We begin with the raw amino-acid sequence, 406 residues long: O-succinylhomoserine sulfhydrylase (406 aa).

Lys-219 carries the N6-(pyridoxal phosphate)lysine modification.

This sequence belongs to the trans-sulfuration enzymes family. MetZ subfamily. As to quaternary structure, homotetramer. It depends on pyridoxal 5'-phosphate as a cofactor.

The catalysed reaction is O-succinyl-L-homoserine + hydrogen sulfide = L-homocysteine + succinate. It participates in amino-acid biosynthesis; L-methionine biosynthesis via de novo pathway; L-homocysteine from O-succinyl-L-homoserine: step 1/1. Catalyzes the formation of L-homocysteine from O-succinyl-L-homoserine (OSHS) and hydrogen sulfide. This Mycobacterium tuberculosis (strain CDC 1551 / Oshkosh) protein is O-succinylhomoserine sulfhydrylase.